The primary structure comprises 642 residues: Protein INCREASED PETAL GROWTH ANISOTROPY 1 (642 aa).

The disordered stretch occupies residues 1-60; that stretch reads MVAGKVRVTMGFHKSPSTKKTKDMPSPLPLPPPPPPPLKPPSSGSATTKPPINPSKPGFT. Residues 26 to 40 show a composition bias toward pro residues; it reads SPLPLPPPPPPPLKP. The stretch at 80 to 183 forms a coiled coil; the sequence is AASHNGVVSE…EAEIVELRKL (104 aa). Positions 223 to 351 are disordered; sequence NLPEPITNQE…PPKSLSIASA (129 aa). Over residues 247 to 256 the composition is skewed to basic and acidic residues; sequence DIYRKDEIES. Positions 258–277 are enriched in low complexity; sequence SRSSNSEELTESSSLSTVRS. Positions 302 to 344 are enriched in pro residues; it reads DPPPQKSIPPPPPPPPPPLLQQPPPPPSVSKAPPPPPPPPPPK.

This sequence belongs to the IPGA1 family. Associates to cortical microtubules via its N-terminal region. Interacts with ANGUSTIFOLIA (AN) on microtubule upon mechanical stress to regulate microtubule organization. Binds to the microtubule-severing enzyme KATANIN (KTN1). Expressed ubiquitously at all development stages, with highest in developing petals. During mechanical stress, accumulates in granules on microtubules.

The protein localises to the cytoplasm. The protein resides in the cytoskeleton. It is found in the cytosol. It localises to the cell membrane. Microtubule-associated protein involved in the regulation of anisotropic petal and cotyledons growth and shape by affecting cortical microtubule organization. Prevents cortical microtubules organization into parallel arrays oriented perpendicular to the axis of cell elongation thus limiting anisotropic cell growth in the late phases of petal development. Cooperatively with ANGUSTIFOLIA (AN), negatively regulates cortical microtubules (CMTs) organization in response to mechanical stress and modulates pavement cells morphogenesis leading to puzzle shape, probably in an AAA1/KTN1-dependent manner. The sequence is that of Protein INCREASED PETAL GROWTH ANISOTROPY 1 from Arabidopsis thaliana (Mouse-ear cress).